Consider the following 236-residue polypeptide: Large ribosomal subunit protein uL1 (236 aa).

It belongs to the universal ribosomal protein uL1 family. Part of the 50S ribosomal subunit.

Binds directly to 23S rRNA. The L1 stalk is quite mobile in the ribosome, and is involved in E site tRNA release. Its function is as follows. Protein L1 is also a translational repressor protein, it controls the translation of the L11 operon by binding to its mRNA. In Kocuria rhizophila (strain ATCC 9341 / DSM 348 / NBRC 103217 / DC2201), this protein is Large ribosomal subunit protein uL1.